The primary structure comprises 157 residues: S-ribosylhomocysteine lyase (157 aa).

Residues His54, His58, and Cys126 each contribute to the Fe cation site.

Belongs to the LuxS family. As to quaternary structure, homodimer. It depends on Fe cation as a cofactor.

The enzyme catalyses S-(5-deoxy-D-ribos-5-yl)-L-homocysteine = (S)-4,5-dihydroxypentane-2,3-dione + L-homocysteine. Functionally, involved in the synthesis of autoinducer 2 (AI-2) which is secreted by bacteria and is used to communicate both the cell density and the metabolic potential of the environment. The regulation of gene expression in response to changes in cell density is called quorum sensing. Catalyzes the transformation of S-ribosylhomocysteine (RHC) to homocysteine (HC) and 4,5-dihydroxy-2,3-pentadione (DPD). This chain is S-ribosylhomocysteine lyase, found in Bacillus pumilus (strain SAFR-032).